The primary structure comprises 133 residues: Acyl-CoA thioester hydrolase YciA (133 aa).

The HotDog ACOT-type domain maps to 8–123 (PQGELVLRTL…LFIYVAVDPD (116 aa)).

This sequence belongs to the acyl coenzyme A hydrolase family.

Its function is as follows. Catalyzes the hydrolysis of the thioester bond in palmitoyl-CoA and malonyl-CoA. The sequence is that of Acyl-CoA thioester hydrolase YciA (yciA) from Salmonella typhi.